Here is a 241-residue protein sequence, read N- to C-terminus: Lipopolysaccharide export system ATP-binding protein LptB (241 aa).

One can recognise an ABC transporter domain in the interval 4-237; sequence LTAKNLAKAY…EHVKRVYLGE (234 aa). 36-43 contributes to the ATP binding site; the sequence is GPNGAGKT.

This sequence belongs to the ABC transporter superfamily. Outer membrane lipopolysaccharide export (TC 1.B.42) family. In terms of assembly, component of the lipopolysaccharide transport and assembly complex. The LptBFG transporter is composed of two ATP-binding proteins (LptB) and two transmembrane proteins (LptF and LptG).

The protein resides in the cytoplasm. Its subcellular location is the cell inner membrane. Its function is as follows. Part of the ABC transporter complex LptBFG involved in the translocation of lipopolysaccharide (LPS) from the inner membrane to the outer membrane. Probably responsible for energy coupling to the transport system. The protein is Lipopolysaccharide export system ATP-binding protein LptB (lptB) of Escherichia coli O157:H7.